A 430-amino-acid chain; its full sequence is Asparagine--tRNA ligase (430 aa).

Belongs to the class-II aminoacyl-tRNA synthetase family. Homodimer.

It is found in the cytoplasm. The enzyme catalyses tRNA(Asn) + L-asparagine + ATP = L-asparaginyl-tRNA(Asn) + AMP + diphosphate + H(+). This chain is Asparagine--tRNA ligase, found in Listeria innocua serovar 6a (strain ATCC BAA-680 / CLIP 11262).